Consider the following 82-residue polypeptide: Small ribosomal subunit protein bS16 (82 aa).

This sequence belongs to the bacterial ribosomal protein bS16 family.

The polypeptide is Small ribosomal subunit protein bS16 (Desulfosudis oleivorans (strain DSM 6200 / JCM 39069 / Hxd3) (Desulfococcus oleovorans)).